The following is a 153-amino-acid chain: Endoribonuclease YbeY (153 aa).

Zn(2+) contacts are provided by His-114, His-118, and His-124.

The protein belongs to the endoribonuclease YbeY family. Requires Zn(2+) as cofactor.

It is found in the cytoplasm. Functionally, single strand-specific metallo-endoribonuclease involved in late-stage 70S ribosome quality control and in maturation of the 3' terminus of the 16S rRNA. In Shewanella baltica (strain OS155 / ATCC BAA-1091), this protein is Endoribonuclease YbeY.